The following is a 73-amino-acid chain: Large ribosomal subunit protein bL31 (73 aa).

Zn(2+) contacts are provided by Cys-16, Cys-18, Cys-36, and Cys-39.

The protein belongs to the bacterial ribosomal protein bL31 family. Type A subfamily. As to quaternary structure, part of the 50S ribosomal subunit. The cofactor is Zn(2+).

Binds the 23S rRNA. In Desulfosudis oleivorans (strain DSM 6200 / JCM 39069 / Hxd3) (Desulfococcus oleovorans), this protein is Large ribosomal subunit protein bL31.